The following is a 535-amino-acid chain: Light-independent protochlorophyllide reductase subunit B (535 aa).

Asp36 is a binding site for [4Fe-4S] cluster. Residue Asp292 is the Proton donor of the active site. A substrate-binding site is contributed by 428–429 (GL). A disordered region spans residues 447 to 483 (SDDAAKAEPDQPVSNAHGHTESKTVSQGEPIASDEGG).

This sequence belongs to the ChlB/BchB/BchZ family. Protochlorophyllide reductase is composed of three subunits; BchL, BchN and BchB. Forms a heterotetramer of two BchB and two BchN subunits. It depends on [4Fe-4S] cluster as a cofactor.

The catalysed reaction is chlorophyllide a + oxidized 2[4Fe-4S]-[ferredoxin] + 2 ADP + 2 phosphate = protochlorophyllide a + reduced 2[4Fe-4S]-[ferredoxin] + 2 ATP + 2 H2O. Its pathway is porphyrin-containing compound metabolism; bacteriochlorophyll biosynthesis (light-independent). Component of the dark-operative protochlorophyllide reductase (DPOR) that uses Mg-ATP and reduced ferredoxin to reduce ring D of protochlorophyllide (Pchlide) to form chlorophyllide a (Chlide). This reaction is light-independent. The NB-protein (BchN-BchB) is the catalytic component of the complex. This is Light-independent protochlorophyllide reductase subunit B from Chlorobium phaeobacteroides (strain DSM 266 / SMG 266 / 2430).